The following is a 421-amino-acid chain: Testin (421 aa).

One can recognise a PET domain in the interval 92-199 (MILTNPVAAK…GDVKLPRDMN (108 aa)). Disordered regions lie at residues 133–164 (EKQPVAGSEGAQYRKKQLAKQLPAHDQDPSKC) and 193–213 (KLPRDMNTQGPNRMYIPGGDR). Over residues 155–164 (PAHDQDPSKC) the composition is skewed to basic and acidic residues. LIM zinc-binding domains follow at residues 234–297 (YSCY…CDSE), 299–359 (PRCA…NHAV), and 362–421 (QGCH…KMMS).

The protein belongs to the prickle / espinas / testin family. Interacts via LIM domain 1 with ZYX. Interacts (via LIM domain 3) with ENAH and VASP. Interacts with ALKBH4, talin, actin, alpha-actinin, GRIP1 and PXN. Interacts (via LIM domain 2) with ACTL7A (via N-terminus). Heterodimer with ACTL7A; the heterodimer interacts with ENAH to form a heterotrimer.

It is found in the cytoplasm. The protein resides in the cell junction. Its subcellular location is the focal adhesion. Functionally, scaffold protein that may play a role in cell adhesion, cell spreading and in the reorganization of the actin cytoskeleton. Plays a role in the regulation of cell proliferation. May act as a tumor suppressor. The chain is Testin (TES) from Muntiacus muntjak (Barking deer).